Consider the following 271-residue polypeptide: MDNRPIGFLDSGVGGLTVVRELKRQLPYESIVYIGDSARAPYGPRPAGQIREYTWQLVKFLLTKDVKMIVIACNTATAVVWEEIKESLDIPVLGVVLPGSSAAIKSSRSGQIGVIGTPMTISSNIYEQKIKRLAPQMNVLSLSCPRFAPIVESNEINSSVAKKIVYESMAPLVDRVDTLVLGCTHYPLLRPIIQNVMGLSVKLIDSGAETVRDVSVLLNYFEINRSREVKDKTEEYYTTASVLGFKEIAEQWLGEEVTVQHVDLDKELEND.

Substrate is bound by residues 10 to 11 (DS) and 42 to 43 (YG). Cys73 (proton donor/acceptor) is an active-site residue. 74–75 (NT) is a substrate binding site. Cys183 serves as the catalytic Proton donor/acceptor. 184–185 (TH) is a substrate binding site.

The protein belongs to the aspartate/glutamate racemases family.

The catalysed reaction is L-glutamate = D-glutamate. Its pathway is cell wall biogenesis; peptidoglycan biosynthesis. Functionally, provides the (R)-glutamate required for cell wall biosynthesis. This chain is Glutamate racemase, found in Streptococcus thermophilus (strain ATCC BAA-250 / LMG 18311).